A 184-amino-acid polypeptide reads, in one-letter code: ATP synthase subunit b, chloroplastic (184 aa).

A helical membrane pass occupies residues 27 to 49; sequence LATNPINLSVVFGVLIFFGKGVL.

This sequence belongs to the ATPase B chain family. In terms of assembly, F-type ATPases have 2 components, F(1) - the catalytic core - and F(0) - the membrane proton channel. F(1) has five subunits: alpha(3), beta(3), gamma(1), delta(1), epsilon(1). F(0) has four main subunits: a(1), b(1), b'(1) and c(10-14). The alpha and beta chains form an alternating ring which encloses part of the gamma chain. F(1) is attached to F(0) by a central stalk formed by the gamma and epsilon chains, while a peripheral stalk is formed by the delta, b and b' chains.

It is found in the plastid. The protein resides in the chloroplast thylakoid membrane. F(1)F(0) ATP synthase produces ATP from ADP in the presence of a proton or sodium gradient. F-type ATPases consist of two structural domains, F(1) containing the extramembraneous catalytic core and F(0) containing the membrane proton channel, linked together by a central stalk and a peripheral stalk. During catalysis, ATP synthesis in the catalytic domain of F(1) is coupled via a rotary mechanism of the central stalk subunits to proton translocation. Its function is as follows. Component of the F(0) channel, it forms part of the peripheral stalk, linking F(1) to F(0). The sequence is that of ATP synthase subunit b, chloroplastic from Olimarabidopsis pumila (Dwarf rocket).